Consider the following 725-residue polypeptide: Kinesin-like protein KIN-8A (725 aa).

The disordered stretch occupies residues Met-1 to Gly-32. Positions Arg-151–Ile-481 constitute a Kinesin motor domain. Gly-243 to Thr-250 contacts ATP. Coiled-coil stretches lie at residues Glu-499–Asn-541 and Glu-583–Leu-617. Disordered regions lie at residues Gly-652–Ser-672 and Ser-691–His-725. Residues Arg-655–Ser-665 show a composition bias toward basic and acidic residues.

The protein belongs to the TRAFAC class myosin-kinesin ATPase superfamily. Kinesin family. KIN-8 subfamily.

The polypeptide is Kinesin-like protein KIN-8A (Arabidopsis thaliana (Mouse-ear cress)).